A 287-amino-acid chain; its full sequence is Pyridoxal kinase PdxY (287 aa).

Residues Ser10 and 45 to 46 (TQ) each bind substrate. Residues Asp112, Ala144, Glu149, Lys182, and 209–212 (RPLV) each bind ATP. Asp224 is a substrate binding site.

The protein belongs to the pyridoxine kinase family. PdxY subfamily. As to quaternary structure, homodimer. It depends on Mg(2+) as a cofactor.

It catalyses the reaction pyridoxal + ATP = pyridoxal 5'-phosphate + ADP + H(+). Its pathway is cofactor metabolism; pyridoxal 5'-phosphate salvage; pyridoxal 5'-phosphate from pyridoxal: step 1/1. In terms of biological role, pyridoxal kinase involved in the salvage pathway of pyridoxal 5'-phosphate (PLP). Catalyzes the phosphorylation of pyridoxal to PLP. This is Pyridoxal kinase PdxY from Escherichia coli O6:H1 (strain CFT073 / ATCC 700928 / UPEC).